The following is a 183-amino-acid chain: MHLLPELASHHAVSIPELLVSRDERQARQHVWLKRHPVPLVSFTVVAPGPIKDSEVTRRIFNHGVTALRALAAKQGWQIQEQAALVSASGPEGMLSIAAPARDLKLATIELEHSHPLGRLWDIDVLTPEGEILSRRDYSLPPRSCLLCEQSAAVCARGKTHQLTDLLNRMEALLNDVDACNVN.

This sequence belongs to the CitX family.

The enzyme catalyses apo-[citrate lyase ACP] + 2'-(5''-triphospho-alpha-D-ribosyl)-3'-dephospho-CoA = holo-[citrate lyase ACP] + diphosphate. Functionally, transfers 2-(5''-triphosphoribosyl)-3'-dephosphocoenzyme-A on a serine residue to the apo-acyl carrier protein (gamma chain) of the citrate lyase to yield holo-acyl carrier protein. The polypeptide is Apo-citrate lyase phosphoribosyl-dephospho-CoA transferase (Escherichia coli O139:H28 (strain E24377A / ETEC)).